The following is a 225-amino-acid chain: Suppressor of cytokine signaling 3 (225 aa).

A kinase inhibitory region (KIR) region spans residues 22–33 (LKTFSSKSEYQL). Residues 34-45 (VVNAVRKLQESG) form an extended SH2 subdomain (ESS) region. Positions 46-142 (FYWSAVTGGE…APSFSLPPTE (97 aa)) constitute an SH2 domain. Residues 141 to 160 (TEPSFEVQEQPPAQALPGGT) are disordered. Positions 177-224 (VLSRPLSSNVATLQHLCRKTVNGHLDSYEKVTQLPGPIREFLDQYDAP) constitute an SOCS box domain.

As to quaternary structure, interacts with multiple activated proteins of the tyrosine kinase signaling pathway including IGF1 receptor, insulin receptor and JAK2. Binding to JAK2 is mediated through the KIR and SH2 domains to a phosphorylated tyrosine residue within the JAK2 JH1 domain. Binds specific activated tyrosine residues of the leptin, EPO, IL12, GSCF and gp130 receptors. Interaction with CSNK1E stabilize SOCS3 protein. Component of the probable ECS(SOCS3) E3 ubiquitin-protein ligase complex which contains CUL5, RNF7/RBX2, Elongin BC complex and SOCS3. Interacts with CUL5, RNF7, ELOB and ELOC. Interacts with FGFR3. Interacts with INSR. Interacts with BCL10; this interaction may interfere with BCL10-binding with PELI2. Interacts with NOD2 (via CARD domain); the interaction promotes NOD2 degradation. Phosphorylated on tyrosine residues after stimulation by the cytokines, IL-2, EPO or IGF1.

It functions in the pathway protein modification; protein ubiquitination. Its function is as follows. SOCS family proteins form part of a classical negative feedback system that regulates cytokine signal transduction. SOCS3 is involved in negative regulation of cytokines that signal through the JAK/STAT pathway. Inhibits cytokine signal transduction by binding to tyrosine kinase receptors including IL6ST/gp130, LIF, erythropoietin, insulin, IL12, GCSF and leptin receptors. Binding to JAK2 inhibits its kinase activity and regulates IL6 signaling. Suppresses fetal liver erythropoiesis. Regulates onset and maintenance of allergic responses mediated by T-helper type 2 cells. Probable substrate recognition component of a SCF-like ECS (Elongin BC-CUL2/5-SOCS-box protein) E3 ubiquitin-protein ligase complex which mediates the ubiquitination and subsequent proteasomal degradation of target proteins. This chain is Suppressor of cytokine signaling 3, found in Rattus norvegicus (Rat).